Reading from the N-terminus, the 1990-residue chain is Protein TANC2 (1990 aa).

2 disordered regions span residues Met1–Glu85 and Ser129–Thr149. Phosphoserine is present on residues Ser169, Ser238, Ser294, and Ser400. The interval Ile396 to Glu442 is disordered. Positions Pro419–Cys431 are enriched in polar residues. ANK repeat units lie at residues Glu846 to Tyr878, Asn884 to Ala913, Ser917 to His946, Asn950 to Gly979, Ala990 to Glu1019, Trp1033 to Gln1062, Arg1066 to Met1095, Gln1099 to Leu1128, Glu1132 to His1161, Asn1165 to His1194, and Ser1198 to Pro1227. TPR repeat units follow at residues Leu1244–Glu1277, Val1291–Ser1324, and Tyr1325–Asn1358. Disordered stretches follow at residues Cys1372–His1401, Glu1430–Gln1586, and Leu1692–Gly1718. Phosphoserine is present on residues Ser1442 and Ser1458. The segment covering Arg1469–Tyr1498 has biased composition (polar residues). Phosphoserine is present on residues Ser1530 and Ser1545. A compositionally biased stretch (polar residues) spans Val1553 to Gln1572. Asymmetric dimethylarginine is present on residues Arg1563 and Arg1576. Ser1579 is subject to Phosphoserine. Ser1722 is modified (phosphoserine). The span at Ser1783–Thr1798 shows a compositional bias: low complexity. 2 disordered regions span residues Ser1783–Ser1803 and Asp1821–Thr1843. A phosphoserine mark is found at Ser1824 and Ser1827. N-linked (GlcNAc...) asparagine glycosylation is present at Asn1928. Residues Ser1968–Val1990 form a disordered region.

It belongs to the TANC family. In terms of assembly, interacts with KIF1A; the interaction decreases in presence of calcium.

Its subcellular location is the cell projection. The protein resides in the dendritic spine. Its function is as follows. Scaffolding protein in the dendritic spines which acts as immobile postsynaptic posts able to recruit KIF1A-driven dense core vesicles to dendritic spines. In Homo sapiens (Human), this protein is Protein TANC2 (TANC2).